A 1445-amino-acid polypeptide reads, in one-letter code: CD109 antigen (1445 aa).

The signal sequence occupies residues 1–21; it reads MQGPPLLTAAHLLCVCTAALA. Residues Asn68, Asn118, Asn247, Asn279, Asn365, Asn419, Asn513, and Asn645 are each glycosylated (N-linked (GlcNAc...) asparagine). A bait region (approximate) region spans residues 593–702; the sequence is DKSVNLMNAS…TWIWLDTNMG (110 aa). The isoglutamyl cysteine thioester (Cys-Gln) cross-link spans 921 to 924; sequence CGEQ. N-linked (GlcNAc...) asparagine glycans are attached at residues Asn1086 and Asn1355. The GPI-anchor amidated alanine moiety is linked to residue Ala1420. Positions 1421 to 1445 are cleaved as a propeptide — removed in mature form; sequence SGSHHHSSVIFIFCFKLLYFMELWL.

The protein belongs to the protease inhibitor I39 (alpha-2-macroglobulin) family. As to quaternary structure, heterodimer; disulfide-linked. Interacts with TGFB1 and TGFBR1. Forms a heteromeric complex with TGFBR1, TGFBR2 and TGFBR3 in a ligand-independent manner. In terms of processing, N-glycosylated. 2 forms of 150 (p150) and 120 kDa (p120) exist due to proteolytic degradation from a 180 kDa form. Widely expressed with high level in uterus, aorta, heart, lung, trachea, placenta and in fetal heart, kidney, liver, spleen and lung. Expressed by CD34(+) acute myeloid leukemia cell lines, T-cell lines, activated T-lymphoblasts, endothelial cells and activated platelets. Isoform 4 is expressed in placenta. Isoform 1 is expressed in keratinocytes and placenta.

It localises to the cell membrane. Modulates negatively TGFB1 signaling in keratinocytes. The sequence is that of CD109 antigen (CD109) from Homo sapiens (Human).